Here is a 36-residue protein sequence, read N- to C-terminus: U14-ctenitoxin-Co1b (36 aa).

As to expression, expressed by the venom gland.

It localises to the secreted. Its function is as follows. Not toxic to mice by intracerebroventricular injection. In Ctenus ornatus (Brazilian spider), this protein is U14-ctenitoxin-Co1b.